We begin with the raw amino-acid sequence, 341 residues long: Glucokinase (341 aa).

Residue 18–23 coordinates ATP; the sequence is GDIGGT.

It belongs to the bacterial glucokinase family.

It localises to the cytoplasm. The catalysed reaction is D-glucose + ATP = D-glucose 6-phosphate + ADP + H(+). In Rhizobium etli (strain CIAT 652), this protein is Glucokinase.